Here is a 141-residue protein sequence, read N- to C-terminus: Granulocyte-macrophage colony-stimulating factor (141 aa).

The signal sequence occupies residues 1-17 (MWLQNLLFLGIVVYSLS). O-linked (GalNAc...) serine glycosylation occurs at serine 22. O-linked (GalNAc...) threonine glycosylation occurs at threonine 27. 2 disulfide bridges follow: cysteine 68–cysteine 110 and cysteine 102–cysteine 135. Residues asparagine 83 and asparagine 92 are each glycosylated (N-linked (GlcNAc...) asparagine).

This sequence belongs to the GM-CSF family. Monomer. The signaling GM-CSF receptor complex is a dodecamer of two head-to-head hexamers of two alpha, two beta, and two ligand subunits.

Its subcellular location is the secreted. In terms of biological role, cytokine that stimulates the growth and differentiation of hematopoietic precursor cells from various lineages, including granulocytes, macrophages, eosinophils and erythrocytes. The protein is Granulocyte-macrophage colony-stimulating factor (Csf2) of Mus musculus (Mouse).